We begin with the raw amino-acid sequence, 213 residues long: MGITMDEEVIFETPRELISIKRIKDIPRSKDTHVFAACITSDGYPLIGARRTSFAFQAILSQQNSDSIFRVSTKLLRFMYYNELREIFRRLRKGSINNIDPHFEELILLGGKLDKKESIKDCLRRELKEESDERITVKEFGNVILKLTTQDKLFNKVYIGYCMSCFINQSLEDLSHTSIYNVEIRKIKSLNDCINDDKYEYLSYIYNMLVNSK.

The region spanning 30–209 is the Nudix hydrolase domain; it reads KDTHVFAACI…EYLSYIYNML (180 aa). The short motif at 111–132 is the Nudix box element; the sequence is GKLDKKESIKDCLRRELKEESD. Residue Glu-117 coordinates Mg(2+). The active-site Nucleophile is Glu-126. Mg(2+) contacts are provided by Glu-130 and Asp-151.

The protein belongs to the Nudix hydrolase family. Mg(2+) serves as cofactor. The cofactor is Mn(2+).

In terms of biological role, decapping enzyme required for the removal of the 5'-end m7GpppN cap tethered to viral and host mRNAs to allow their decay in cells. May therefore accelerate viral and cellular mRNA turnover to eliminate competing host mRNAs and allow stage-specific synthesis of viral proteins. Acceleration of the turnover of cellular transcripts may even promote the shutoff of host protein synthesis. Does not cleave unmethylated RNAs or RNAs shorter than 24 nucleotides. This Homo sapiens (Human) protein is mRNA-decapping protein D9.